The chain runs to 116 residues: Large ribosomal subunit protein bL20 (116 aa).

It belongs to the bacterial ribosomal protein bL20 family.

In terms of biological role, binds directly to 23S ribosomal RNA and is necessary for the in vitro assembly process of the 50S ribosomal subunit. It is not involved in the protein synthesizing functions of that subunit. The sequence is that of Large ribosomal subunit protein bL20 from Nautilia profundicola (strain ATCC BAA-1463 / DSM 18972 / AmH).